The following is a 579-amino-acid chain: Arginine--tRNA ligase (579 aa).

The short motif at 127–137 (ANPTGPLHVGH) is the 'HIGH' region element.

Belongs to the class-I aminoacyl-tRNA synthetase family. As to quaternary structure, monomer.

It is found in the cytoplasm. It catalyses the reaction tRNA(Arg) + L-arginine + ATP = L-arginyl-tRNA(Arg) + AMP + diphosphate. The sequence is that of Arginine--tRNA ligase from Acidithiobacillus ferrooxidans (strain ATCC 23270 / DSM 14882 / CIP 104768 / NCIMB 8455) (Ferrobacillus ferrooxidans (strain ATCC 23270)).